Here is a 317-residue protein sequence, read N- to C-terminus: Melanocyte-stimulating hormone receptor (317 aa).

The Extracellular segment spans residues 1–37 (MPVLGSQRRLLGSLNCTPPATFSLTLAPNRTGPQCLE). A glycan (N-linked (GlcNAc...) asparagine) is linked at Asn-29. The helical transmembrane segment at 38–63 (VSIPDGLFLSLGLVSLVENVLVVAAI) threads the bilayer. Topologically, residues 64–72 (AKNRNLHSP) are cytoplasmic. Residues 73-93 (MYYFICCLAVSDLLVSVSNVL) form a helical membrane-spanning segment. The Extracellular segment spans residues 94–118 (ETAVMLLLEAGALAARAAVVQQLDN). A helical transmembrane segment spans residues 119 to 140 (VIDVLICGSMVSSLCFLGAIAM). The Cytoplasmic portion of the chain corresponds to 141–163 (DRYISIFYALRYHSVVTLPRAWR). Residues 164 to 183 (IIAAIWVASILTSLLFITYY) form a helical membrane-spanning segment. At 184 to 191 (NHTVVLLC) the chain is on the extracellular side. Residues 192–211 (LVGFFIAMLALMAILYVHML) traverse the membrane as a helical segment. Topologically, residues 212–240 (ARACQHARDIARLQKRQHPIHQGFGLKGA) are cytoplasmic. A helical membrane pass occupies residues 241 to 266 (ATLTILLGVFFLCWGPFFLHLSLIVL). The Extracellular portion of the chain corresponds to 267-279 (CPQHPTCGCIFKN). The helical transmembrane segment at 280–300 (FNLFLALIICNAIVDPLIYAF) threads the bilayer. The Cytoplasmic portion of the chain corresponds to 301 to 317 (RSQELRKTLQEVLQCSW). The S-palmitoyl cysteine moiety is linked to residue Cys-315.

This sequence belongs to the G-protein coupled receptor 1 family. Interacts with MGRN1, but does not undergo MGRN1-mediated ubiquitination; this interaction competes with GNAS-binding and thus inhibits agonist-induced cAMP production. Interacts with OPN3; the interaction results in a decrease in MC1R-mediated cAMP signaling and ultimately a decrease in melanin production in melanocytes.

The protein localises to the cell membrane. Functionally, receptor for MSH (alpha, beta and gamma) and ACTH. The activity of this receptor is mediated by G proteins which activate adenylate cyclase. Mediates melanogenesis, the production of eumelanin (black/brown) and phaeomelanin (red/yellow), via regulation of cAMP signaling in melanocytes. The sequence is that of Melanocyte-stimulating hormone receptor (MC1R) from Alces alces alces (European moose).